The sequence spans 1400 residues: DNA-directed RNA polymerase subunit beta' (1400 aa).

Positions 71, 73, 86, and 89 each coordinate Zn(2+). Residues D462, D464, and D466 each contribute to the Mg(2+) site. Zn(2+)-binding residues include C810, C884, C891, and C894. The disordered stretch occupies residues 1378–1400; it reads EKQATIVPPAAPEAEPLALPPAE.

It belongs to the RNA polymerase beta' chain family. The RNAP catalytic core consists of 2 alpha, 1 beta, 1 beta' and 1 omega subunit. When a sigma factor is associated with the core the holoenzyme is formed, which can initiate transcription. Mg(2+) serves as cofactor. Zn(2+) is required as a cofactor.

The enzyme catalyses RNA(n) + a ribonucleoside 5'-triphosphate = RNA(n+1) + diphosphate. Functionally, DNA-dependent RNA polymerase catalyzes the transcription of DNA into RNA using the four ribonucleoside triphosphates as substrates. This chain is DNA-directed RNA polymerase subunit beta', found in Rhodopseudomonas palustris (strain BisB5).